A 431-amino-acid chain; its full sequence is Leucine carboxyl methyltransferase 1 (431 aa).

Residues R103, G131, D159, and 219–220 (DL) contribute to the S-adenosyl-L-methionine site. A disordered region spans residues 228–268 (QPQQPLPPGVPIGSRGLHASPFTPGSTTQHEEQTEETSLPQ). Residue E289 coordinates S-adenosyl-L-methionine.

This sequence belongs to the methyltransferase superfamily. LCMT family.

The enzyme catalyses [phosphatase 2A protein]-C-terminal L-leucine + S-adenosyl-L-methionine = [phosphatase 2A protein]-C-terminal L-leucine methyl ester + S-adenosyl-L-homocysteine. Its function is as follows. Methylates the carboxyl group of the C-terminal leucine residue of protein phosphatase 2A catalytic subunits to form alpha-leucine ester residues. In Neurospora crassa (strain ATCC 24698 / 74-OR23-1A / CBS 708.71 / DSM 1257 / FGSC 987), this protein is Leucine carboxyl methyltransferase 1 (ppm-1).